Consider the following 280-residue polypeptide: Pantothenate synthetase (280 aa).

ATP is bound at residue M26–H33. Catalysis depends on H33, which acts as the Proton donor. Q57 is a (R)-pantoate binding site. Q57 is a binding site for beta-alanine. An ATP-binding site is contributed by G145–D148. Q151 serves as a coordination point for (R)-pantoate. ATP-binding positions include V174 and L182 to R185.

This sequence belongs to the pantothenate synthetase family. As to quaternary structure, homodimer.

The protein localises to the cytoplasm. It carries out the reaction (R)-pantoate + beta-alanine + ATP = (R)-pantothenate + AMP + diphosphate + H(+). It functions in the pathway cofactor biosynthesis; (R)-pantothenate biosynthesis; (R)-pantothenate from (R)-pantoate and beta-alanine: step 1/1. Functionally, catalyzes the condensation of pantoate with beta-alanine in an ATP-dependent reaction via a pantoyl-adenylate intermediate. In Bordetella avium (strain 197N), this protein is Pantothenate synthetase.